A 161-amino-acid chain; its full sequence is Zinc metalloproteinase/disintegrin (161 aa).

The 72-residue stretch at 1 to 72 folds into the Peptidase M12B domain; sequence ERDLLVAVTM…ENPQCILNKH (72 aa). Zn(2+) is bound at residue His12. Glu13 is a catalytic residue. 2 residues coordinate Zn(2+): His16 and His22. 2 disulfides stabilise this stretch: Cys27–Cys51 and Cys29–Cys34. Residues 73-88 constitute a propeptide that is removed on maturation; the sequence is LRTDTVSTPVSGNELL. One can recognise a Disintegrin domain in the interval 89 to 161; it reads EAGEECDCGT…ADCPRNRFHA (73 aa). 6 disulfide bridges follow: Cys94/Cys109, Cys96/Cys104, Cys103/Cys126, Cys117/Cys123, Cys122/Cys147, and Cys135/Cys154. Positions 139–141 match the Cell attachment site motif; the sequence is RGD.

It belongs to the venom metalloproteinase (M12B) family. P-II subfamily. P-IIa sub-subfamily. In terms of assembly, monomer. Expressed by the venom gland.

Its subcellular location is the secreted. Its function is as follows. Impairs hemostasis in the envenomed animal. Functionally, disintegrin: inhibit platelet aggregation induced by ADP, thrombin, platelet-activating factor and collagen. Acts by inhibiting fibrinogen interaction with platelet receptors GPIIb/GPIIIa (ITGA2B/ITGB3). This chain is Zinc metalloproteinase/disintegrin, found in Bothrops jararaca (Jararaca).